Consider the following 155-residue polypeptide: UPF0178 protein RHE_CH02229 (155 aa).

Belongs to the UPF0178 family.

This chain is UPF0178 protein RHE_CH02229, found in Rhizobium etli (strain ATCC 51251 / DSM 11541 / JCM 21823 / NBRC 15573 / CFN 42).